The chain runs to 122 residues: Large ribosomal subunit protein uL14 (122 aa).

This sequence belongs to the universal ribosomal protein uL14 family. In terms of assembly, part of the 50S ribosomal subunit. Forms a cluster with proteins L3 and L19. In the 70S ribosome, L14 and L19 interact and together make contacts with the 16S rRNA in bridges B5 and B8.

Its function is as follows. Binds to 23S rRNA. Forms part of two intersubunit bridges in the 70S ribosome. This Halorhodospira halophila (strain DSM 244 / SL1) (Ectothiorhodospira halophila (strain DSM 244 / SL1)) protein is Large ribosomal subunit protein uL14.